A 146-amino-acid polypeptide reads, in one-letter code: UPF0178 protein BCA_3127 (146 aa).

The protein belongs to the UPF0178 family.

The protein is UPF0178 protein BCA_3127 of Bacillus cereus (strain 03BB102).